The sequence spans 423 residues: Protein CLP1 homolog (423 aa).

ATP-binding positions include glutamate 16, lysine 57, and 119–124 (DVGKST).

It belongs to the Clp1 family. Clp1 subfamily.

It localises to the nucleus. Required for endonucleolytic cleavage during polyadenylation-dependent pre-mRNA 3'-end formation. In Drosophila melanogaster (Fruit fly), this protein is Protein CLP1 homolog (cbc).